Consider the following 371-residue polypeptide: uncharacterized protein (371 aa).

The interval 339-371 (KVTHEDLVKNRPRSPVRPPIPATAKTPDLPERH) is disordered.

This is an uncharacterized protein from Escherichia coli (strain K12).